A 979-amino-acid chain; its full sequence is Glycine dehydrogenase (decarboxylating) (979 aa).

Lysine 724 is subject to N6-(pyridoxal phosphate)lysine.

Belongs to the GcvP family. As to quaternary structure, the glycine cleavage system is composed of four proteins: P, T, L and H. Pyridoxal 5'-phosphate serves as cofactor.

The catalysed reaction is N(6)-[(R)-lipoyl]-L-lysyl-[glycine-cleavage complex H protein] + glycine + H(+) = N(6)-[(R)-S(8)-aminomethyldihydrolipoyl]-L-lysyl-[glycine-cleavage complex H protein] + CO2. Functionally, the glycine cleavage system catalyzes the degradation of glycine. The P protein binds the alpha-amino group of glycine through its pyridoxal phosphate cofactor; CO(2) is released and the remaining methylamine moiety is then transferred to the lipoamide cofactor of the H protein. The protein is Glycine dehydrogenase (decarboxylating) of Nostoc punctiforme (strain ATCC 29133 / PCC 73102).